Here is a 223-residue protein sequence, read N- to C-terminus: DNA mismatch repair protein MutH (223 aa).

Belongs to the MutH family.

The protein localises to the cytoplasm. Sequence-specific endonuclease that cleaves unmethylated GATC sequences. It is involved in DNA mismatch repair. This is DNA mismatch repair protein MutH from Shewanella sp. (strain MR-7).